The primary structure comprises 858 residues: MDLSSDQLVMKIVEMGFEKLDALEAVKAVGGKSCDDAVEYILKGNHRTGGFKPASLLCSSGSNKILGKRAMPSSFSSSESKRQSSLLDHFRSVNQNKKKGDTFGTVEVDSQLETVSEHSEEVRKSLAPVFMESSCFPEGQLLNGCSEASSSWEKRVNSILRNRFGISSLRSFQREALSTWVAHKDCLVLAATGSGKSLCFQIPALLTGKVVVVISPLISLMHDQCLKLSRHKVSACFLGSGQLDNCIEEKAMQGMYQIIYVCPETVVRLIKPLQKLAKTHGIALFAIDEAHCVSKWGHDFRPHYRKLSVLRENFCASNLEFLEYDVPIMALTATATVNVQEDILESLHLSKETKIVLTSFFRPNLQFSVKHSRTKFASSYAKDFQNLVDLYSEKKNSTGKKLAVISRESEEQTDFGSHDSENIHETDYDEDEEDQENSLAKKNSSNGKELSEAYLEDETDIFQSVDDWDVACGEFCAMPSCELLEIPVPSEKQKDLEGLTIIYVPTRKESVNIAKYLCGVGLKAAAYNASLPKKHLRQVHQDFHDNKLQVVVATIAFGMGIDKKNVRKIIHYGWLQSLEAYYQEAGRAGRDGELAECVLYADLSRAPTLLPSRRSKEQTEQAYKMLSDCFRYGMNTSQCRAKILVEYFGEEFSSKKCNSCDVCTEGPPELVDVREEANLLFQVITAFHLQVDNDSEHAPYEDYGLGNSKQNKLSHKPNLLFFISKLREQCEKFKETDCLWWKGLARIMEAEGYIKEMDNKDRRVEIKFIQPTEKGKKQLDFQDDKPLYVYPEADMLLSLKQDRTYSGFSEWGKGWADPEIRRQRLERRERKPRRERKPRKKRTRGRSSTKLHPWRSKE.

The UBA domain maps to 2–44; that stretch reads DLSSDQLVMKIVEMGFEKLDALEAVKAVGGKSCDDAVEYILKG. In terms of domain architecture, Helicase ATP-binding spans 177–353; it reads LSTWVAHKDC…LESLHLSKET (177 aa). 190-197 provides a ligand contact to ATP; the sequence is AATGSGKS. A DEAH box motif is present at residues 288–291; the sequence is DEAH. Positions 402-450 are disordered; the sequence is LAVISRESEEQTDFGSHDSENIHETDYDEDEEDQENSLAKKNSSNGKEL. Basic and acidic residues predominate over residues 416-426; it reads GSHDSENIHET. Positions 427–436 are enriched in acidic residues; sequence DYDEDEEDQE. Over residues 437 to 448 the composition is skewed to polar residues; that stretch reads NSLAKKNSSNGK. Residues 491–627 enclose the Helicase C-terminal domain; sequence EKQKDLEGLT…QTEQAYKMLS (137 aa). Residues 822–858 are disordered; that stretch reads RQRLERRERKPRRERKPRKKRTRGRSSTKLHPWRSKE. The span at 830 to 858 shows a compositional bias: basic residues; it reads RKPRRERKPRKKRTRGRSSTKLHPWRSKE.

Belongs to the helicase family. RecQ subfamily. The cofactor is Mg(2+). Mn(2+) serves as cofactor. In terms of tissue distribution, mostly expressed in roots and seedlings, and, to a lower extent, in leaves, shoots, shoot apical mersitem, inflorescences, flowers, siliques and seeds.

It is found in the nucleus. It carries out the reaction Couples ATP hydrolysis with the unwinding of duplex DNA by translocating in the 3'-5' direction.. The enzyme catalyses ATP + H2O = ADP + phosphate + H(+). Functionally, plant specific, probable 3'-5' DNA helicase that may play a role in the repair of DNA. The protein is ATP-dependent DNA helicase Q-like SIM (RECQSIM) of Arabidopsis thaliana (Mouse-ear cress).